The sequence spans 549 residues: Chaperonin GroEL (549 aa).

Residues 29-32 (TAGP), lysine 50, 86-90 (DGTTT), glycine 418, and aspartate 499 each bind ATP.

The protein belongs to the chaperonin (HSP60) family. As to quaternary structure, forms a cylinder of 14 subunits composed of two heptameric rings stacked back-to-back. Interacts with the co-chaperonin GroES.

It is found in the cytoplasm. It carries out the reaction ATP + H2O + a folded polypeptide = ADP + phosphate + an unfolded polypeptide.. Together with its co-chaperonin GroES, plays an essential role in assisting protein folding. The GroEL-GroES system forms a nano-cage that allows encapsulation of the non-native substrate proteins and provides a physical environment optimized to promote and accelerate protein folding. The polypeptide is Chaperonin GroEL (Wolbachia pipientis wMel).